The chain runs to 181 residues: Acireductone dioxygenase (181 aa).

Residues histidine 98, histidine 100, glutamate 104, and histidine 142 each contribute to the Fe(2+) site. Histidine 98, histidine 100, glutamate 104, and histidine 142 together coordinate Ni(2+).

The protein belongs to the acireductone dioxygenase (ARD) family. As to quaternary structure, monomer. It depends on Fe(2+) as a cofactor. Ni(2+) serves as cofactor.

It catalyses the reaction 1,2-dihydroxy-5-(methylsulfanyl)pent-1-en-3-one + O2 = 3-(methylsulfanyl)propanoate + CO + formate + 2 H(+). The catalysed reaction is 1,2-dihydroxy-5-(methylsulfanyl)pent-1-en-3-one + O2 = 4-methylsulfanyl-2-oxobutanoate + formate + 2 H(+). It functions in the pathway amino-acid biosynthesis; L-methionine biosynthesis via salvage pathway; L-methionine from S-methyl-5-thio-alpha-D-ribose 1-phosphate: step 5/6. Catalyzes 2 different reactions between oxygen and the acireductone 1,2-dihydroxy-3-keto-5-methylthiopentene (DHK-MTPene) depending upon the metal bound in the active site. Fe-containing acireductone dioxygenase (Fe-ARD) produces formate and 2-keto-4-methylthiobutyrate (KMTB), the alpha-ketoacid precursor of methionine in the methionine recycle pathway. Ni-containing acireductone dioxygenase (Ni-ARD) produces methylthiopropionate, carbon monoxide and formate, and does not lie on the methionine recycle pathway. The protein is Acireductone dioxygenase of Synechococcus sp. (strain ATCC 27144 / PCC 6301 / SAUG 1402/1) (Anacystis nidulans).